Here is a 369-residue protein sequence, read N- to C-terminus: Anhydro-N-acetylmuramic acid kinase (369 aa).

12–19 (GTSMDGVD) lines the ATP pocket.

This sequence belongs to the anhydro-N-acetylmuramic acid kinase family.

It carries out the reaction 1,6-anhydro-N-acetyl-beta-muramate + ATP + H2O = N-acetyl-D-muramate 6-phosphate + ADP + H(+). It participates in amino-sugar metabolism; 1,6-anhydro-N-acetylmuramate degradation. The protein operates within cell wall biogenesis; peptidoglycan recycling. Catalyzes the specific phosphorylation of 1,6-anhydro-N-acetylmuramic acid (anhMurNAc) with the simultaneous cleavage of the 1,6-anhydro ring, generating MurNAc-6-P. Is required for the utilization of anhMurNAc either imported from the medium or derived from its own cell wall murein, and thus plays a role in cell wall recycling. The protein is Anhydro-N-acetylmuramic acid kinase of Shewanella putrefaciens (strain CN-32 / ATCC BAA-453).